A 332-amino-acid chain; its full sequence is MSELTGGIIECILKIIVVLLIFSALAGFGTYLERKVLGFFQRRIGPNYVGPYGLLQVVADGIKLFAKEDIIPQNAIKPIFILAPSIAAITAFIAMAPIPFFPEFEIFGYVVRPIIADINVGILFVLAVSSCGIYAPLLAGLSSGNKWSLIGGARAAIQFLSFEVITILSLLAPLMIIESLSLIDINNYQQGSMLDWLIFKQPLAFGLFIIAAYVELNRTPFDLLEHEAELTAGFATEYSGLKWGMFFIGEYANMFATAFILSLVFCGGFNDWGFIPGGIAILLKVCFFIFLFMWVRATFPHVRPDQLMRMCWKIMLPLALLNVLITGCILLF.

9 helical membrane-spanning segments follow: residues 8–28 (IIEC…LAGF), 44–66 (IGPN…KLFA), 78–98 (PIFI…MAPI), 120–140 (VGIL…LLAG), 157–177 (IQFL…LMII), 196–216 (WLIF…YVEL), 245–265 (MFFI…SLVF), 274–294 (FIPG…LFMW), and 312–332 (WKIM…ILLF).

The protein belongs to the complex I subunit 1 family. NDH-1 is composed of 14 different subunits. Subunits NuoA, H, J, K, L, M, N constitute the membrane sector of the complex.

The protein localises to the cell inner membrane. It carries out the reaction a quinone + NADH + 5 H(+)(in) = a quinol + NAD(+) + 4 H(+)(out). Its function is as follows. NDH-1 shuttles electrons from NADH, via FMN and iron-sulfur (Fe-S) centers, to quinones in the respiratory chain. The immediate electron acceptor for the enzyme in this species is believed to be ubiquinone. Couples the redox reaction to proton translocation (for every two electrons transferred, four hydrogen ions are translocated across the cytoplasmic membrane), and thus conserves the redox energy in a proton gradient. This subunit may bind ubiquinone. This is NADH-quinone oxidoreductase subunit H from Helicobacter hepaticus (strain ATCC 51449 / 3B1).